The chain runs to 838 residues: DNA gyrase subunit A (838 aa).

The 470-residue stretch at 41–510 folds into the Topo IIA-type catalytic domain; it reads LPEVRDGLKP…ADGDVSDEDL (470 aa). Tyrosine 129 functions as the O-(5'-phospho-DNA)-tyrosine intermediate in the catalytic mechanism. A GyrA-box motif is present at residues 537-543; that stretch reads QKRGGKG.

This sequence belongs to the type II topoisomerase GyrA/ParC subunit family. In terms of assembly, heterotetramer, composed of two GyrA and two GyrB chains. In the heterotetramer, GyrA contains the active site tyrosine that forms a transient covalent intermediate with DNA, while GyrB binds cofactors and catalyzes ATP hydrolysis.

The protein localises to the cytoplasm. It catalyses the reaction ATP-dependent breakage, passage and rejoining of double-stranded DNA.. A type II topoisomerase that negatively supercoils closed circular double-stranded (ds) DNA in an ATP-dependent manner to modulate DNA topology and maintain chromosomes in an underwound state. Negative supercoiling favors strand separation, and DNA replication, transcription, recombination and repair, all of which involve strand separation. Also able to catalyze the interconversion of other topological isomers of dsDNA rings, including catenanes and knotted rings. Type II topoisomerases break and join 2 DNA strands simultaneously in an ATP-dependent manner. This Mycobacterium tuberculosis (strain CDC 1551 / Oshkosh) protein is DNA gyrase subunit A.